The chain runs to 652 residues: UvrABC system protein C (652 aa).

One can recognise a GIY-YIG domain in the interval lysine 19–isoleucine 96. The 36-residue stretch at glutamate 203 to leucine 238 folds into the UVR domain.

Belongs to the UvrC family. Interacts with UvrB in an incision complex.

It localises to the cytoplasm. Functionally, the UvrABC repair system catalyzes the recognition and processing of DNA lesions. UvrC both incises the 5' and 3' sides of the lesion. The N-terminal half is responsible for the 3' incision and the C-terminal half is responsible for the 5' incision. In Treponema denticola (strain ATCC 35405 / DSM 14222 / CIP 103919 / JCM 8153 / KCTC 15104), this protein is UvrABC system protein C.